The primary structure comprises 119 residues: Ribonuclease P protein component (119 aa).

Belongs to the RnpA family. Consists of a catalytic RNA component (M1 or rnpB) and a protein subunit.

It catalyses the reaction Endonucleolytic cleavage of RNA, removing 5'-extranucleotides from tRNA precursor.. In terms of biological role, RNaseP catalyzes the removal of the 5'-leader sequence from pre-tRNA to produce the mature 5'-terminus. It can also cleave other RNA substrates such as 4.5S RNA. The protein component plays an auxiliary but essential role in vivo by binding to the 5'-leader sequence and broadening the substrate specificity of the ribozyme. The protein is Ribonuclease P protein component of Nitrosomonas europaea (strain ATCC 19718 / CIP 103999 / KCTC 2705 / NBRC 14298).